The sequence spans 403 residues: S-adenosylmethionine synthase (403 aa).

H16 serves as a coordination point for ATP. D18 contacts Mg(2+). E44 lines the K(+) pocket. L-methionine contacts are provided by E57 and Q100. The segment at 100–110 (QSNDIAQGVDH) is flexible loop. ATP-binding positions include 167–169 (DAK), 238–239 (RF), D247, 253–254 (RK), A270, and K274. D247 provides a ligand contact to L-methionine. K278 provides a ligand contact to L-methionine.

It belongs to the AdoMet synthase family. As to quaternary structure, homotetramer; dimer of dimers. The cofactor is Mg(2+). K(+) serves as cofactor.

The protein resides in the cytoplasm. It catalyses the reaction L-methionine + ATP + H2O = S-adenosyl-L-methionine + phosphate + diphosphate. It functions in the pathway amino-acid biosynthesis; S-adenosyl-L-methionine biosynthesis; S-adenosyl-L-methionine from L-methionine: step 1/1. Its function is as follows. Catalyzes the formation of S-adenosylmethionine (AdoMet) from methionine and ATP. The overall synthetic reaction is composed of two sequential steps, AdoMet formation and the subsequent tripolyphosphate hydrolysis which occurs prior to release of AdoMet from the enzyme. The chain is S-adenosylmethionine synthase from Verminephrobacter eiseniae (strain EF01-2).